The following is a 161-amino-acid chain: uncharacterized protein (161 aa).

The helical transmembrane segment at 76–94 (ISISSQCIFNVVILSFVFT) threads the bilayer.

Its subcellular location is the membrane. This is an uncharacterized protein from Saccharomyces cerevisiae (strain ATCC 204508 / S288c) (Baker's yeast).